The primary structure comprises 206 residues: Small ribosomal subunit protein uS4 (206 aa).

Residues 96–158 (SRLDNVVYRM…AKKQLRIQNA (63 aa)) enclose the S4 RNA-binding domain.

Belongs to the universal ribosomal protein uS4 family. Part of the 30S ribosomal subunit. Contacts protein S5. The interaction surface between S4 and S5 is involved in control of translational fidelity.

Functionally, one of the primary rRNA binding proteins, it binds directly to 16S rRNA where it nucleates assembly of the body of the 30S subunit. With S5 and S12 plays an important role in translational accuracy. This chain is Small ribosomal subunit protein uS4, found in Francisella tularensis subsp. tularensis (strain FSC 198).